Here is a 399-residue protein sequence, read N- to C-terminus: UDP-galactopyranose mutase (399 aa).

4 residues coordinate FAD: Phe18, Glu38, Asn46, and Leu66. UDP-alpha-D-galactose-binding residues include Phe157, Thr162, Trp166, and Tyr191. 224–225 (DW) is an FAD binding site. UDP-alpha-D-galactose is bound by residues Asn282, Arg292, and Tyr328. FAD is bound at residue Arg360. Tyr366 lines the UDP-alpha-D-galactose pocket. Residue 367–369 (LDM) coordinates FAD.

Belongs to the UDP-galactopyranose/dTDP-fucopyranose mutase family. Homotetramer. The cofactor is FAD.

The catalysed reaction is UDP-alpha-D-galactose = UDP-alpha-D-galactofuranose. It participates in cell wall biogenesis; cell wall polysaccharide biosynthesis. Its function is as follows. Catalyzes the interconversion through a 2-keto intermediate of uridine diphosphogalactopyranose (UDP-GalP) into uridine diphosphogalactofuranose (UDP-GalF) which is a key building block for cell wall construction in Mycobacterium tuberculosis. This is UDP-galactopyranose mutase (glf) from Mycobacterium tuberculosis (strain CDC 1551 / Oshkosh).